A 195-amino-acid polypeptide reads, in one-letter code: Putative NADH dehydrogenase/NAD(P)H nitroreductase CC_0061 (195 aa).

It belongs to the nitroreductase family. HadB/RutE subfamily. The cofactor is FMN.

This chain is Putative NADH dehydrogenase/NAD(P)H nitroreductase CC_0061, found in Caulobacter vibrioides (strain ATCC 19089 / CIP 103742 / CB 15) (Caulobacter crescentus).